The primary structure comprises 428 residues: Glutamate-1-semialdehyde 2,1-aminomutase (428 aa).

Lys267 carries the post-translational modification N6-(pyridoxal phosphate)lysine.

Belongs to the class-III pyridoxal-phosphate-dependent aminotransferase family. HemL subfamily. In terms of assembly, homodimer. It depends on pyridoxal 5'-phosphate as a cofactor.

It is found in the cytoplasm. It carries out the reaction (S)-4-amino-5-oxopentanoate = 5-aminolevulinate. Its pathway is porphyrin-containing compound metabolism; protoporphyrin-IX biosynthesis; 5-aminolevulinate from L-glutamyl-tRNA(Glu): step 2/2. The protein operates within porphyrin-containing compound metabolism; chlorophyll biosynthesis. This Prochlorococcus marinus (strain NATL1A) protein is Glutamate-1-semialdehyde 2,1-aminomutase.